We begin with the raw amino-acid sequence, 39 residues long: Photosystem II reaction center protein Y (39 aa).

Residues 7 to 25 (LLIVLLPILAAAGWAVFNI) form a helical membrane-spanning segment.

It belongs to the PsbY family. In terms of assembly, PSII is composed of 1 copy each of membrane proteins PsbA, PsbB, PsbC, PsbD, PsbE, PsbF, PsbH, PsbI, PsbJ, PsbK, PsbL, PsbM, PsbT, PsbX, PsbY, PsbZ, Psb30/Ycf12, peripheral proteins PsbO, CyanoQ (PsbQ), PsbU, PsbV and a large number of cofactors. It forms dimeric complexes.

The protein localises to the cellular thylakoid membrane. Functionally, loosely associated component of the core of photosystem II (PSII), it is not always seen in crystals. PSII is a light-driven water plastoquinone oxidoreductase, using light energy to abstract electrons from H(2)O, generating a proton gradient subsequently used for ATP formation. The chain is Photosystem II reaction center protein Y from Trichodesmium erythraeum (strain IMS101).